The following is a 330-amino-acid chain: Cobalamin biosynthesis protein CobD (330 aa).

4 helical membrane-spanning segments follow: residues 60–80 (TLVI…PPIV), 153–173 (GIIA…LLGV), 227–247 (LGIV…WKIF), and 308–328 (IVLF…FVLT).

This sequence belongs to the CobD/CbiB family.

The protein localises to the cell membrane. It functions in the pathway cofactor biosynthesis; adenosylcobalamin biosynthesis. Its function is as follows. Converts cobyric acid to cobinamide by the addition of aminopropanol on the F carboxylic group. The protein is Cobalamin biosynthesis protein CobD of Desulfotalea psychrophila (strain LSv54 / DSM 12343).